Reading from the N-terminus, the 415-residue chain is Casein kinase I isoform delta (415 aa).

One can recognise a Protein kinase domain in the interval 9-277; the sequence is YRLGRKIGSG…YLRQLFRNLF (269 aa). Residues 15–23 and K38 contribute to the ATP site; that span reads IGSGSFGDI. Residue D128 is the Proton acceptor of the active site. The interval 278–364 is centrosomal localization signal (CLS); that stretch reads HRQGFSYDYV…TSPRPVSGME (87 aa). The segment covering 301-315 has biased composition (basic and acidic residues); it reads ADDAERERRDREERL. Positions 301 to 415 are disordered; sequence ADDAERERRD…SSGLQSVVHR (115 aa). The tract at residues 317-342 is autoinhibitory; it reads HSRNPATRGLPSTASGRLRGTQEVAP. A phosphoserine mark is found at S328 and S331. The segment covering 347–358 has biased composition (polar residues); it reads TPTSHTANTSPR. Position 370 is a phosphoserine (S370). Residue R375 is modified to Omega-N-methylarginine. Residues 380–400 are compositionally biased toward polar residues; it reads NISSSDLTGRQDTSRMSTSQI. A phosphoserine mark is found at S382, S383, S384, S407, and S411.

This sequence belongs to the protein kinase superfamily. CK1 Ser/Thr protein kinase family. Casein kinase I subfamily. In terms of assembly, monomer. Component of the circadian core oscillator, which includes the CRY proteins, CLOCK, or NPAS2, ARTNL/BMAL1 or ARTNL2/BMAL2, CSNK1D and/or CSNK1E, TIMELESS and the PER proteins. Interacts with DNMT1 and MAP1A. Interacts directly with PER1 and PER2 which may lead to their degradation. Interacts with MAPT/TAU, SNAPIN, DBNDD2, AIB1/NCOA3 and ESR1. Interacts with AKAP9/AKAP450; this interaction promotes centrosomal subcellular location. Binds to tubulins in mitotic cells upon DNA damage. Interacts with GJA1. Interacts with DDX3X; this interaction enhances CSNK1D kinase activity in vitro, but it is unclear whether this interaction is physiologically relevant. Interacts with FAM83A, FAM83B, FAM83E and FAM83H (via DUF1669). In terms of processing, autophosphorylated on serine and threonine residues; this autophosphorylation represses activity. Reactivated by phosphatase-mediated dephosphorylation. May be dephosphorylated by PP1.

The protein localises to the cytoplasm. It is found in the nucleus. Its subcellular location is the cytoskeleton. The protein resides in the microtubule organizing center. It localises to the centrosome. The protein localises to the perinuclear region. It is found in the cell membrane. Its subcellular location is the spindle. The protein resides in the golgi apparatus. It carries out the reaction L-seryl-[protein] + ATP = O-phospho-L-seryl-[protein] + ADP + H(+). The catalysed reaction is L-threonyl-[protein] + ATP = O-phospho-L-threonyl-[protein] + ADP + H(+). The enzyme catalyses L-seryl-[tau protein] + ATP = O-phospho-L-seryl-[tau protein] + ADP + H(+). It catalyses the reaction L-threonyl-[tau protein] + ATP = O-phospho-L-threonyl-[tau protein] + ADP + H(+). Its activity is regulated as follows. Drug-mediated inhibition leads to a delay of the oscillations with the magnitude of this effect dependent upon the timing of drug administration. Inhibited by phosphorylation. Exhibits substrate-dependent heparin activation. Its function is as follows. Essential serine/threonine-protein kinase that regulates diverse cellular growth and survival processes including Wnt signaling, DNA repair and circadian rhythms. It can phosphorylate a large number of proteins. Casein kinases are operationally defined by their preferential utilization of acidic proteins such as caseins as substrates. Phosphorylates connexin-43/GJA1, MAP1A, SNAPIN, MAPT/TAU, TOP2A, DCK, HIF1A, EIF6, p53/TP53, DVL2, DVL3, ESR1, AIB1/NCOA3, DNMT1, PKD2, YAP1, PER1 and PER2. Central component of the circadian clock. In balance with PP1, determines the circadian period length through the regulation of the speed and rhythmicity of PER1 and PER2 phosphorylation. Controls PER1 and PER2 nuclear transport and degradation. YAP1 phosphorylation promotes its SCF(beta-TRCP) E3 ubiquitin ligase-mediated ubiquitination and subsequent degradation. DNMT1 phosphorylation reduces its DNA-binding activity. Phosphorylation of ESR1 and AIB1/NCOA3 stimulates their activity and coactivation. Phosphorylation of DVL2 and DVL3 regulates WNT3A signaling pathway that controls neurite outgrowth. Phosphorylates NEDD9/HEF1. EIF6 phosphorylation promotes its nuclear export. Triggers down-regulation of dopamine receptors in the forebrain. Activates DCK in vitro by phosphorylation. TOP2A phosphorylation favors DNA cleavable complex formation. May regulate the formation of the mitotic spindle apparatus in extravillous trophoblast. Modulates connexin-43/GJA1 gap junction assembly by phosphorylation. Probably involved in lymphocyte physiology. Regulates fast synaptic transmission mediated by glutamate. The chain is Casein kinase I isoform delta (CSNK1D) from Bos taurus (Bovine).